The chain runs to 239 residues: 1-(5-phosphoribosyl)-5-[(5-phosphoribosylamino)methylideneamino] imidazole-4-carboxamide isomerase (239 aa).

Residue Asp-8 is the Proton acceptor of the active site. The active-site Proton donor is Asp-129.

Belongs to the HisA/HisF family.

It localises to the cytoplasm. It carries out the reaction 1-(5-phospho-beta-D-ribosyl)-5-[(5-phospho-beta-D-ribosylamino)methylideneamino]imidazole-4-carboxamide = 5-[(5-phospho-1-deoxy-D-ribulos-1-ylimino)methylamino]-1-(5-phospho-beta-D-ribosyl)imidazole-4-carboxamide. It functions in the pathway amino-acid biosynthesis; L-histidine biosynthesis; L-histidine from 5-phospho-alpha-D-ribose 1-diphosphate: step 4/9. In Roseobacter denitrificans (strain ATCC 33942 / OCh 114) (Erythrobacter sp. (strain OCh 114)), this protein is 1-(5-phosphoribosyl)-5-[(5-phosphoribosylamino)methylideneamino] imidazole-4-carboxamide isomerase.